The sequence spans 386 residues: Homogentisate solanesyltransferase, chloroplastic (386 aa).

The transit peptide at 1–69 directs the protein to the chloroplast; it reads MELSISQSPR…STNYRKISIR (69 aa). 8 helical membrane passes run 130-150, 181-201, 204-220, 225-245, 259-279, 306-326, 335-355, and 365-385; these read VLKA…IVGI, LVIF…GPFI, LYSL…VPPL, FPVA…NFGV, WSAP…VIAI, IAFL…SLAF, SLMI…TWVL, and ISGY…LFPF.

The protein belongs to the UbiA prenyltransferase family.

The protein localises to the plastid. It localises to the chloroplast membrane. It catalyses the reaction all-trans-nonaprenyl diphosphate + homogentisate + H(+) = 2-methyl-6-(all-trans-nonaprenyl)benzene-1,4-diol + CO2 + diphosphate. Its activity is regulated as follows. Inhibited by haloxydine (3,5-dichloro-2,6-difluoro-4-haloxypyridine). In terms of biological role, involved in the synthesis of plastoquinone-9. Can use both homogentisic acid and 2,5-dihydroxyphenylacetic acid gamma-lactone as prenyl acceptors, and solanesyl diphosphate &gt; farnesyl diphosphate &gt; geranylgeranyl diphosphate &gt;&gt; phytyl diphosphate as prenyl donors. Do not catalyze the decardoxylation of homogentisate uncoupled from prenylation. The chain is Homogentisate solanesyltransferase, chloroplastic (HST) from Arabidopsis thaliana (Mouse-ear cress).